The chain runs to 495 residues: Ectonucleoside triphosphate diphosphohydrolase 2 (495 aa).

Topologically, residues 1-4 are cytoplasmic; that stretch reads MAGK. A helical transmembrane segment spans residues 5 to 25; it reads LVSLVPPLLLAAVGLAGLLLL. Residues 26–462 lie on the Extracellular side of the membrane; the sequence is CVPTQDVREP…PGLRKGTHFS (437 aa). Asparagine 64 carries an N-linked (GlcNAc...) asparagine glycan. Residues cysteine 75 and cysteine 99 are joined by a disulfide bond. Asparagine 129 carries an N-linked (GlcNAc...) asparagine glycan. Glutamate 165 acts as the Proton acceptor in catalysis. 204 to 208 contacts ATP; it reads GASTQ. Intrachain disulfides connect cysteine 242/cysteine 284 and cysteine 265/cysteine 310. N-linked (GlcNAc...) asparagine glycosylation is found at asparagine 294 and asparagine 319. 2 cysteine pairs are disulfide-bonded: cysteine 323/cysteine 328 and cysteine 377/cysteine 399. 2 N-linked (GlcNAc...) asparagine glycosylation sites follow: asparagine 378 and asparagine 443. A helical transmembrane segment spans residues 463 to 483; it reads SWVALLLLFTVLILAALVLLL. Residues 484-495 are Cytoplasmic-facing; the sequence is RQVRSAKSPGAL.

Belongs to the GDA1/CD39 NTPase family. The cofactor is Ca(2+). Requires Mg(2+) as cofactor.

Its subcellular location is the cell membrane. In the nervous system, could hydrolyze ATP and other nucleotides to regulate purinergic neurotransmission. Hydrolyzes ADP only to a marginal extent. The chain is Ectonucleoside triphosphate diphosphohydrolase 2 (Entpd2) from Mus musculus (Mouse).